The primary structure comprises 615 residues: Delta-like protein B (615 aa).

The signal sequence occupies residues 1-20 (MAHLSLYCLLSVSLLQLVAS). The Extracellular portion of the chain corresponds to 21 to 522 (SGVFELKVHS…VGQTSPSAVA (502 aa)). Residues 159 to 203 (VFCDEFYFGEACSDYCRPRDDTLGHYTCDENGNKECLVGWQGDYC) form the DSL domain. Cystine bridges form between cysteine 161/cysteine 170, cysteine 174/cysteine 186, cysteine 194/cysteine 203, cysteine 208/cysteine 219, cysteine 212/cysteine 225, cysteine 227/cysteine 236, cysteine 245/cysteine 250, cysteine 258/cysteine 267, cysteine 274/cysteine 286, cysteine 280/cysteine 296, cysteine 298/cysteine 307, cysteine 314/cysteine 325, cysteine 319/cysteine 334, cysteine 336/cysteine 345, cysteine 352/cysteine 363, cysteine 357/cysteine 373, cysteine 375/cysteine 384, cysteine 391/cysteine 402, cysteine 396/cysteine 411, cysteine 413/cysteine 422, cysteine 429/cysteine 440, cysteine 434/cysteine 449, cysteine 451/cysteine 460, cysteine 467/cysteine 478, cysteine 472/cysteine 487, and cysteine 489/cysteine 498. EGF-like domains follow at residues 204–237 (SDPI…PSCS), 241–268 (HYPG…LFCN), and 270–308 (DLNY…TNCE). One can recognise an EGF-like 4; calcium-binding domain in the interval 310–346 (EINECDCNPCKNGGSCNDLENDYSCTCPQGFYGKNCE). 2 consecutive EGF-like domains span residues 348 to 385 (IAMT…SNCE) and 387 to 423 (RLDR…SRCE). One can recognise an EGF-like 7; calcium-binding domain in the interval 425–461 (NIDDCARYPCQNAGTCQDGINDYTCTCTLGFTGKNCS). Asparagine 459 carries N-linked (GlcNAc...) asparagine glycosylation. The 37-residue stretch at 463 to 499 (RADACLTNPCLHGGTCFTHFSGPVCQCVPGFMGSTCE) folds into the EGF-like 8 domain. Residues 523 to 543 (VSCVLGVLAVFLGVCVGLVVL) form a helical membrane-spanning segment. The Cytoplasmic portion of the chain corresponds to 544 to 615 (RRRRHRLRRQ…FLWSAGGGLR (72 aa)).

Post-translationally, ubiquitinated by mib, leading to its endocytosis and subsequent degradation.

It localises to the membrane. In terms of biological role, acts as a ligand for Notch receptors and is involved in primary neurogenesis. Can activate Notch receptors, thereby playing a key role in lateral inhibition, a process that prevents the immediate neighbors of each nascent neural cell from simultaneously embarking on neural differentiation. The polypeptide is Delta-like protein B (dlb) (Danio rerio (Zebrafish)).